A 170-amino-acid polypeptide reads, in one-letter code: MDLKKYIRDVKNFPKPGILFKDISPLLADGEALNYTITSMAEVAKDVDVIVGPDARGFLFGTPTAAVLKKPFIMVRKPGKLPGKVISREYDLEYGNNILQIQADFIKKGQTVAIVDDVLATGGTIKAIIKLLKEQGAIIKKVIILLELTDLNGRDSINEDGIEIVSLVKF.

It belongs to the purine/pyrimidine phosphoribosyltransferase family. In terms of assembly, homodimer.

It is found in the cytoplasm. It catalyses the reaction AMP + diphosphate = 5-phospho-alpha-D-ribose 1-diphosphate + adenine. It participates in purine metabolism; AMP biosynthesis via salvage pathway; AMP from adenine: step 1/1. Catalyzes a salvage reaction resulting in the formation of AMP, that is energically less costly than de novo synthesis. This chain is Adenine phosphoribosyltransferase, found in Mycoplasmopsis agalactiae (strain NCTC 10123 / CIP 59.7 / PG2) (Mycoplasma agalactiae).